The sequence spans 555 residues: MSSFSYEPYYSTSYKRRYVETPRVHISSVRSGYSTARSAYSSYSAPVSSSLSVRRSYSSSSGSLMPSLESLDLSQVAAISNDLKSIRTQEKAQLQDLNDRFASFIERVHELEQQNKVLEAELLVLRQKHSEPSRFRALYEQEIRDLRLAAEDATNEKQALQGEREGLEETLRNLQARYEEEVLSREDAEGRLMEARKGADEAALARAELEKRIDSLMDEIAFLKKVHEEEIAELQAQIQYAQISVEMDVSSKPDLSAALKDIRAQYEKLAAKNMQNAEEWFKSRFTVLTESAAKNTDAVRAAKDEVSESRRLLKAKTLEIEACRGMNEALEKQLQELEDKQNADISAMQDTINKLENELRTTKSEMARYLKEYQDLLNVKMALDIEIAAYRKLLEGEETRLSFTSVGSLTTGYTQSSQVFGRSAYGGLQTSSYLMSARSFPSYYTSHVQEEQIEVEETIEAAKAEEAKDEPPSEGEAEEEEKEKEEAEAEAEAEAEAEAEEEEGAQEEEAAKEDAEEAKEEEGGEGEEAEETKEAEEEEKKDEGAGEEQATKKKD.

The residue at position 2 (serine 2) is an N-acetylserine. The segment at 2–93 (SSFSYEPYYS…KSIRTQEKAQ (92 aa)) is head. At arginine 23 the chain carries Asymmetric dimethylarginine; alternate. Residue arginine 23 is modified to Omega-N-methylarginine; alternate. Omega-N-methylarginine is present on arginine 30. A Phosphotyrosine modification is found at tyrosine 43. Residues serine 56, serine 67, and serine 103 each carry the phosphoserine modification. In terms of domain architecture, IF rod spans 90-401 (EKAQLQDLND…KLLEGEETRL (312 aa)). The tract at residues 94 to 125 (LQDLNDRFASFIERVHELEQQNKVLEAELLVL) is coil 1A. The linker 1 stretch occupies residues 126 to 138 (RQKHSEPSRFRAL). Residues 139–234 (YEQEIRDLRL…KVHEEEIAEL (96 aa)) form a coil 1B region. The interval 235-253 (QAQIQYAQISVEMDVSSKP) is linker 12. Residues 254–272 (DLSAALKDIRAQYEKLAAK) are coil 2A. The linker 2 stretch occupies residues 273–281 (NMQNAEEWF). A coil 2B region spans residues 282-397 (KSRFTVLTES…AAYRKLLEGE (116 aa)). The tail, subdomain A stretch occupies residues 398-444 (ETRLSFTSVGSLTTGYTQSSQVFGRSAYGGLQTSSYLMSARSFPSYY). The interval 398 to 555 (ETRLSFTSVG…GEEQATKKKD (158 aa)) is tail. The segment at 445–555 (TSHVQEEQIE…GEEQATKKKD (111 aa)) is tail, subdomain B (acidic). The interval 463-555 (KAEEAKDEPP…GEEQATKKKD (93 aa)) is disordered. A compositionally biased stretch (acidic residues) spans 472–540 (PSEGEAEEEE…ETKEAEEEEK (69 aa)). Serine 473 bears the Phosphoserine mark. Threonine 532 bears the Phosphothreonine mark. Basic and acidic residues predominate over residues 541-555 (KDEGAGEEQATKKKD).

The protein belongs to the intermediate filament family. As to quaternary structure, forms homodimers (in vitro). Forms heterodimers with NEFH or NEFM; which can further hetero-oligomerize (in vitro). Forms heterodimers with INA (in vitro). Interacts with ARHGEF28. Interacts with TRIM2. O-glycosylated. Post-translationally, phosphorylated in the head and rod regions by the PKC kinase PKN1, leading to the inhibition of polymerization. In terms of processing, ubiquitinated in the presence of TRIM2 and UBE2D1.

Its subcellular location is the cell projection. The protein resides in the axon. It localises to the cytoplasm. The protein localises to the cytoskeleton. Functionally, neurofilaments usually contain three intermediate filament proteins: NEFL, NEFM, and NEFH which are involved in the maintenance of neuronal caliber. May additionally cooperate with the neuronal intermediate filament proteins PRPH and INA to form neuronal filamentous networks. This chain is Neurofilament light polypeptide (NEFL), found in Bos taurus (Bovine).